We begin with the raw amino-acid sequence, 298 residues long: Diphthine methyl ester synthase (298 aa).

S-adenosyl-L-methionine-binding positions include L9, D85, G88, 113-114 (SV), L164, L222, and H247.

It belongs to the diphthine synthase family.

The protein resides in the cytoplasm. It catalyses the reaction 2-[(3S)-amino-3-carboxypropyl]-L-histidyl-[translation elongation factor 2] + 4 S-adenosyl-L-methionine = diphthine methyl ester-[translation elongation factor 2] + 4 S-adenosyl-L-homocysteine + 3 H(+). It functions in the pathway protein modification; peptidyl-diphthamide biosynthesis. Its function is as follows. S-adenosyl-L-methionine-dependent methyltransferase that catalyzes four methylations of the modified target histidine residue in translation elongation factor 2 (EF-2), to form an intermediate called diphthine methyl ester. The four successive methylation reactions represent the second step of diphthamide biosynthesis. In Eremothecium gossypii (strain ATCC 10895 / CBS 109.51 / FGSC 9923 / NRRL Y-1056) (Yeast), this protein is Diphthine methyl ester synthase (DPH5).